Here is a 104-residue protein sequence, read N- to C-terminus: Replication restart protein PriB (104 aa).

An SSB domain is found at 1 to 101 (MTNRLVLSGT…LHAEQIELID (101 aa)).

The protein belongs to the PriB family. Homodimer. Interacts with PriA and DnaT. Component of the replication restart primosome. Primosome assembly occurs via a 'hand-off' mechanism. PriA binds to replication forks, subsequently PriB then DnaT bind; DnaT then displaces ssDNA to generate the helicase loading substrate.

In terms of biological role, involved in the restart of stalled replication forks, which reloads the replicative helicase on sites other than the origin of replication; the PriA-PriB pathway is the major replication restart pathway. During primosome assembly it facilitates complex formation between PriA and DnaT on DNA; stabilizes PriA on DNA. Stimulates the DNA unwinding activity of PriA helicase. In Shigella dysenteriae serotype 1 (strain Sd197), this protein is Replication restart protein PriB.